A 77-amino-acid chain; its full sequence is Homeodomain-only protein (77 aa).

The homeobox; degenerate DNA-binding region spans 7 to 65 (AALGVRLTEDQVKVLEENFTKVSKHPDETTLMLIAAECGLSEEQTAVWFRMRNAQWRKA).

The protein resides in the nucleus. It is found in the cytoplasm. Functionally, atypical homeodomain protein which does not bind DNA and is required to modulate cardiac growth and development. May act via an interaction with SRF, leading to modulate the expression of SRF-dependent cardiac-specific genes and cardiac development. May act as a co-chaperone for HSPA1A and HSPA1B chaperone proteins and assist in chaperone-mediated protein refolding. In Danio rerio (Zebrafish), this protein is Homeodomain-only protein (hopx).